We begin with the raw amino-acid sequence, 96 residues long: Protein RnfH (96 aa).

Belongs to the UPF0125 (RnfH) family.

The chain is Protein RnfH from Klebsiella pneumoniae (strain 342).